A 556-amino-acid polypeptide reads, in one-letter code: Cholesterol oxidase (556 aa).

5 residues coordinate FAD: glycine 18, glutamate 37, glycine 88, alanine 93, and valine 235. Residue histidine 471 is the Proton acceptor of the active site. FAD is bound at residue glycine 504.

This sequence belongs to the GMC oxidoreductase family. FAD is required as a cofactor.

The enzyme catalyses cholesterol + O2 = cholest-5-en-3-one + H2O2. It carries out the reaction cholest-5-en-3-one = cholest-4-en-3-one. Its pathway is steroid metabolism; cholesterol degradation. In terms of biological role, bifunctional enzyme that catalyzes the oxidation and isomerization of cholesterol to cholestenone (cholest-4-en-3-one), an initial step in the cholesterol degradation process. The polypeptide is Cholesterol oxidase (Acinetobacter baumannii).